We begin with the raw amino-acid sequence, 78 residues long: uncharacterized protein (78 aa).

This is an uncharacterized protein from Schizosaccharomyces pombe (strain 972 / ATCC 24843) (Fission yeast).